The primary structure comprises 92 residues: YcgL domain-containing protein VC_1957 (92 aa).

The 84-residue stretch at 1–84 (MLCSIYKSPK…PPENLLEQHK (84 aa)) folds into the YcgL domain. Residues 69–92 (FLQLPPPPENLLEQHKERKARQTP) are disordered.

The chain is YcgL domain-containing protein VC_1957 from Vibrio cholerae serotype O1 (strain ATCC 39315 / El Tor Inaba N16961).